The sequence spans 315 residues: Porphobilinogen deaminase (315 aa).

Cys-241 carries the post-translational modification S-(dipyrrolylmethanemethyl)cysteine.

It belongs to the HMBS family. As to quaternary structure, monomer. It depends on dipyrromethane as a cofactor.

The enzyme catalyses 4 porphobilinogen + H2O = hydroxymethylbilane + 4 NH4(+). It participates in porphyrin-containing compound metabolism; protoporphyrin-IX biosynthesis; coproporphyrinogen-III from 5-aminolevulinate: step 2/4. Tetrapolymerization of the monopyrrole PBG into the hydroxymethylbilane pre-uroporphyrinogen in several discrete steps. This chain is Porphobilinogen deaminase, found in Nitratidesulfovibrio vulgaris (strain ATCC 29579 / DSM 644 / CCUG 34227 / NCIMB 8303 / VKM B-1760 / Hildenborough) (Desulfovibrio vulgaris).